Reading from the N-terminus, the 447-residue chain is Gustatory receptor family protein 3 (447 aa).

The Extracellular portion of the chain corresponds to 1–69 (MTITASNTLE…HTHSSARNTM (69 aa)). The helical transmembrane segment at 70–90 (FKWPLTIYNYLTLAILTAATI) threads the bilayer. At 91–116 (RRISQIKQKSATNEEKDAAFHVLNPT) the chain is on the cytoplasmic side. Residues 117 to 137 (FVLTLCHALLMFSGLAAGFLL) traverse the membrane as a helical segment. Residues 138-171 (LKLQKQREKMYHVLDQGLGRNRNEEHDSHHFKLN) lie on the Extracellular side of the membrane. The chain crosses the membrane as a helical span at residues 172–192 (KLFISISFSFAAALSFVQIAT). Residues 193-211 (KMRYLDLPDTPDLINRKIY) are Cytoplasmic-facing. The chain crosses the membrane as a helical span at residues 212–232 (FVILEGYVIFIASSCISLVAI). Over 233–292 (LFFQLCRILQFSIGQLIEEMVPKEKEECPLPEQSLQQIHDVQIHYQEISNAKLYIEQNFS) the chain is Extracellular. The chain crosses the membrane as a helical span at residues 293-313 (FSLFYTYGCCIPLTCLLGYIA). The Cytoplasmic portion of the chain corresponds to 314-328 (FRNGIQADMAETFSV). Residues 329–349 (AIWLTNTMLALMLFSIPAFMI) form a helical membrane-spanning segment. Topologically, residues 350-405 (AEEGDKLLTASFKMYHETLCEERDLLVLSQMSFLSFQMHATKLTLTAGNFFMMNRK) are extracellular. The chain crosses the membrane as a helical span at residues 406–426 (IMISLFSAIFTYFLILVQFDA). At 427-447 (EKERAGECNNQSRVLIVQPPV) the chain is on the cytoplasmic side.

The protein belongs to the insect chemoreceptor superfamily. Gustatory receptor (GR) family. As to expression, expressed in I2 pharyngeal neurons.

The protein resides in the membrane. In terms of biological role, chemoreceptor involved in light-induced avoidance behavior. Probably acts as a molecular sensor in I2 pharyngeal neurons, required for the inhibition of feeding in response to light and hydrogen peroxide. Involved in circadian rhythms, probably by acting as a light sensor. In contrast to lite-1, does not act as a photoreceptor. This Caenorhabditis elegans protein is Gustatory receptor family protein 3.